Reading from the N-terminus, the 203-residue chain is Small ribosomal subunit protein uS4c (203 aa).

One can recognise an S4 RNA-binding domain in the interval 92–150; sequence MRLDNIIYRLGMAPTIANARQLVNHGHIVVNDRIVTIPSYRCKPKDIISVRNNSTSRNV.

Belongs to the universal ribosomal protein uS4 family. In terms of assembly, part of the 30S ribosomal subunit. Contacts protein S5. The interaction surface between S4 and S5 is involved in control of translational fidelity.

Its subcellular location is the plastid. The protein resides in the chloroplast. Its function is as follows. One of the primary rRNA binding proteins, it binds directly to 16S rRNA where it nucleates assembly of the body of the 30S subunit. In terms of biological role, with S5 and S12 plays an important role in translational accuracy. The polypeptide is Small ribosomal subunit protein uS4c (rps4) (Chlorokybus atmophyticus (Soil alga)).